The chain runs to 397 residues: Acetate kinase 1 (397 aa).

Asn8 lines the Mg(2+) pocket. Position 15 (Lys15) interacts with ATP. A substrate-binding site is contributed by Arg89. Asp146 acts as the Proton donor/acceptor in catalysis. Residues 206 to 210, 281 to 283, and 329 to 333 each bind ATP; these read HLGNG, DFR, and GVGEN. Mg(2+) is bound at residue Glu380.

This sequence belongs to the acetokinase family. In terms of assembly, homodimer. The cofactor is Mg(2+). Requires Mn(2+) as cofactor.

It localises to the cytoplasm. It carries out the reaction acetate + ATP = acetyl phosphate + ADP. It participates in metabolic intermediate biosynthesis; acetyl-CoA biosynthesis; acetyl-CoA from acetate: step 1/2. Functionally, catalyzes the formation of acetyl phosphate from acetate and ATP. Can also catalyze the reverse reaction. This is Acetate kinase 1 from Listeria monocytogenes serotype 4b (strain F2365).